The following is a 1054-amino-acid chain: Isoleucine--tRNA ligase (1054 aa).

A 'HIGH' region motif is present at residues 58–68 (PFANGLPHYGH). Positions 627-631 (KMSKS) match the 'KMSKS' region motif. Lysine 630 provides a ligand contact to ATP.

Belongs to the class-I aminoacyl-tRNA synthetase family. IleS type 2 subfamily. In terms of assembly, monomer. Zn(2+) is required as a cofactor.

Its subcellular location is the cytoplasm. It catalyses the reaction tRNA(Ile) + L-isoleucine + ATP = L-isoleucyl-tRNA(Ile) + AMP + diphosphate. In terms of biological role, catalyzes the attachment of isoleucine to tRNA(Ile). As IleRS can inadvertently accommodate and process structurally similar amino acids such as valine, to avoid such errors it has two additional distinct tRNA(Ile)-dependent editing activities. One activity is designated as 'pretransfer' editing and involves the hydrolysis of activated Val-AMP. The other activity is designated 'posttransfer' editing and involves deacylation of mischarged Val-tRNA(Ile). This Corynebacterium efficiens (strain DSM 44549 / YS-314 / AJ 12310 / JCM 11189 / NBRC 100395) protein is Isoleucine--tRNA ligase.